We begin with the raw amino-acid sequence, 198 residues long: V-type ATP synthase subunit E (198 aa).

Belongs to the V-ATPase E subunit family.

Functionally, produces ATP from ADP in the presence of a proton gradient across the membrane. The sequence is that of V-type ATP synthase subunit E from Acetivibrio thermocellus (strain ATCC 27405 / DSM 1237 / JCM 9322 / NBRC 103400 / NCIMB 10682 / NRRL B-4536 / VPI 7372) (Clostridium thermocellum).